A 109-amino-acid chain; its full sequence is Small ribosomal subunit protein uS17 (109 aa).

It belongs to the universal ribosomal protein uS17 family. Part of the 30S ribosomal subunit.

In terms of biological role, one of the primary rRNA binding proteins, it binds specifically to the 5'-end of 16S ribosomal RNA. This chain is Small ribosomal subunit protein uS17, found in Methanococcus maripaludis (strain DSM 14266 / JCM 13030 / NBRC 101832 / S2 / LL).